We begin with the raw amino-acid sequence, 491 residues long: Aspartyl/glutamyl-tRNA(Asn/Gln) amidotransferase subunit B (491 aa).

It belongs to the GatB/GatE family. GatB subfamily. Heterotrimer of A, B and C subunits.

The catalysed reaction is L-glutamyl-tRNA(Gln) + L-glutamine + ATP + H2O = L-glutaminyl-tRNA(Gln) + L-glutamate + ADP + phosphate + H(+). It carries out the reaction L-aspartyl-tRNA(Asn) + L-glutamine + ATP + H2O = L-asparaginyl-tRNA(Asn) + L-glutamate + ADP + phosphate + 2 H(+). Its function is as follows. Allows the formation of correctly charged Asn-tRNA(Asn) or Gln-tRNA(Gln) through the transamidation of misacylated Asp-tRNA(Asn) or Glu-tRNA(Gln) in organisms which lack either or both of asparaginyl-tRNA or glutaminyl-tRNA synthetases. The reaction takes place in the presence of glutamine and ATP through an activated phospho-Asp-tRNA(Asn) or phospho-Glu-tRNA(Gln). The chain is Aspartyl/glutamyl-tRNA(Asn/Gln) amidotransferase subunit B from Prochlorococcus marinus (strain NATL1A).